A 673-amino-acid chain; its full sequence is DNA ligase (673 aa).

NAD(+) is bound by residues 36–40, 85–86, and glutamate 116; these read DAEYD and SL. Lysine 118 acts as the N6-AMP-lysine intermediate in catalysis. Arginine 139, glutamate 176, lysine 291, and lysine 315 together coordinate NAD(+). Positions 409, 412, 427, and 433 each coordinate Zn(2+). The 82-residue stretch at 592–673 folds into the BRCT domain; the sequence is RGEQPLAGRT…LQALLQEHGR (82 aa).

The protein belongs to the NAD-dependent DNA ligase family. LigA subfamily. Requires Mg(2+) as cofactor. Mn(2+) serves as cofactor.

It carries out the reaction NAD(+) + (deoxyribonucleotide)n-3'-hydroxyl + 5'-phospho-(deoxyribonucleotide)m = (deoxyribonucleotide)n+m + AMP + beta-nicotinamide D-nucleotide.. DNA ligase that catalyzes the formation of phosphodiester linkages between 5'-phosphoryl and 3'-hydroxyl groups in double-stranded DNA using NAD as a coenzyme and as the energy source for the reaction. It is essential for DNA replication and repair of damaged DNA. The polypeptide is DNA ligase (Alkalilimnicola ehrlichii (strain ATCC BAA-1101 / DSM 17681 / MLHE-1)).